The sequence spans 289 residues: Nucleotide-binding protein LAF_0356 (289 aa).

12–19 (GMSGAGKT) contacts ATP. 62–65 (DSRS) provides a ligand contact to GTP.

The protein belongs to the RapZ-like family.

In terms of biological role, displays ATPase and GTPase activities. This Limosilactobacillus fermentum (strain NBRC 3956 / LMG 18251) (Lactobacillus fermentum) protein is Nucleotide-binding protein LAF_0356.